A 525-amino-acid chain; its full sequence is NGFI-A-binding protein 2 (525 aa).

A disordered region spans residues 1 to 31 (MHRAPSPTAEQPPGRGDNTRRTPQPRFKASA). S6 bears the Phosphoserine mark. The tract at residues 35-113 (ALPRTLGELQ…REWATNPGLF (79 aa)) is NCD1. A disordered region spans residues 135 to 238 (GTRKGSMSNG…GAGGGPDRLE (104 aa)). Phosphoserine occurs at positions 157, 159, 162, and 171. A compositionally biased stretch (gly residues) spans 212 to 234 (AGGGVSEGPGVGGVAAGGAGGGP). The NCD2 stretch occupies residues 267–356 (LLKLNKKLAR…SRQVARESTY (90 aa)). Positions 353-384 (ESTYLSSLKGSRLHSEELGGPPLKKLKQEVGE) are necessary for nuclear localization. K379 is covalently cross-linked (Glycyl lysine isopeptide (Lys-Gly) (interchain with G-Cter in SUMO1)). Residues 381-416 (EVGEQSHNEIQQPPPGPESYAPPYRPSLEEDSASLS) are disordered. S479 is modified (phosphoserine). Residues 501 to 525 (APGPHPALVEGRRSSVKVEAEASRQ) are disordered. Over residues 510 to 525 (EGRRSSVKVEAEASRQ) the composition is skewed to basic and acidic residues. A Glycyl lysine isopeptide (Lys-Gly) (interchain with G-Cter in SUMO1); alternate cross-link involves residue K517. Residue K517 forms a Glycyl lysine isopeptide (Lys-Gly) (interchain with G-Cter in SUMO2); alternate linkage.

The protein belongs to the NAB family. Homomultimers may associate with EGR1 bound to DNA. In terms of processing, sumoylation by EGR2 represses EGR2 transcriptional activity in hindbrain. Highly expressed in brain and thymus, and at lower levels in spleen, kidney, heart and testis. Isoform 1 is predominantly expressed in testis, whereas isoform 3 is more abundant in thymus.

Its subcellular location is the nucleus. Its function is as follows. Acts as a transcriptional repressor for zinc finger transcription factors EGR1 and EGR2. Isoform 2 lacks repression ability. In Mus musculus (Mouse), this protein is NGFI-A-binding protein 2 (Nab2).